Here is a 231-residue protein sequence, read N- to C-terminus: tRNA (guanine-N(7)-)-methyltransferase (231 aa).

4 residues coordinate S-adenosyl-L-methionine: glutamate 62, glutamate 87, aspartate 114, and aspartate 137. Aspartate 137 is an active-site residue. Residues lysine 141, aspartate 173, and 210-213 each bind substrate; that span reads TKFE.

Belongs to the class I-like SAM-binding methyltransferase superfamily. TrmB family.

The enzyme catalyses guanosine(46) in tRNA + S-adenosyl-L-methionine = N(7)-methylguanosine(46) in tRNA + S-adenosyl-L-homocysteine. Its pathway is tRNA modification; N(7)-methylguanine-tRNA biosynthesis. Its function is as follows. Catalyzes the formation of N(7)-methylguanine at position 46 (m7G46) in tRNA. This chain is tRNA (guanine-N(7)-)-methyltransferase, found in Methylococcus capsulatus (strain ATCC 33009 / NCIMB 11132 / Bath).